We begin with the raw amino-acid sequence, 301 residues long: tRNA dimethylallyltransferase (301 aa).

ATP is bound at residue 2-9 (GPTASGKT). Substrate is bound at residue 4–9 (TASGKT). 2 interaction with substrate tRNA regions span residues 27 to 30 (DSAM) and 151 to 155 (QRIQR).

The protein belongs to the IPP transferase family. As to quaternary structure, monomer. The cofactor is Mg(2+).

The catalysed reaction is adenosine(37) in tRNA + dimethylallyl diphosphate = N(6)-dimethylallyladenosine(37) in tRNA + diphosphate. Functionally, catalyzes the transfer of a dimethylallyl group onto the adenine at position 37 in tRNAs that read codons beginning with uridine, leading to the formation of N6-(dimethylallyl)adenosine (i(6)A). This Coxiella burnetii (strain CbuK_Q154) (Coxiella burnetii (strain Q154)) protein is tRNA dimethylallyltransferase.